A 181-amino-acid chain; its full sequence is Endoribonuclease YbeY (181 aa).

His-120, His-124, and His-130 together coordinate Zn(2+). The segment at 157-181 (AGGKRPAGGADGADGAGEPGPTAAR) is disordered. A compositionally biased stretch (gly residues) spans 161–174 (RPAGGADGADGAGE).

Belongs to the endoribonuclease YbeY family. The cofactor is Zn(2+).

Its subcellular location is the cytoplasm. Its function is as follows. Single strand-specific metallo-endoribonuclease involved in late-stage 70S ribosome quality control and in maturation of the 3' terminus of the 16S rRNA. The protein is Endoribonuclease YbeY of Frankia alni (strain DSM 45986 / CECT 9034 / ACN14a).